A 1088-amino-acid polypeptide reads, in one-letter code: Serine/threonine-protein kinase LATS2 (1088 aa).

Positions 24–49 are disordered; it reads EGLKQPSKSSVQGLPAGPNSDTSLDA. At serine 83 the chain carries Phosphoserine; by AURKA. Residues 98-139 form the UBA domain; sequence EVNRQMLQELVNAGCDQEMAGRALKQTGSRSIEAALEYISKM. The interaction with ubiquitinated AMOTL2 stretch occupies residues 101–141; the sequence is RQMLQELVNAGCDQEMAGRALKQTGSRSIEAALEYISKMGY. The segment covering 271–280 has biased composition (polar residues); it reads RSPSFQSKTP. The segment at 271 to 323 is disordered; sequence RSPSFQSKTPPETGGYASLPTKGQGGPPGAGLAFPPPAAGLYVPHPHHKQAGP. Position 279 is a phosphothreonine (threonine 279). Serine 380 is modified (phosphoserine). 2 disordered regions span residues 383–428 and 454–483; these read KPGL…SLPA and PQTA…AAEG. The segment covering 404–413 has biased composition (polar residues); sequence SRTNSFNSHQ. Residues 466 to 478 show a composition bias toward pro residues; that stretch reads VPAPAPAPAPAPA. Residues 515–518 carry the PPxY motif motif; sequence PPPY. Positions 543–592 are disordered; sequence SLRAGPNEPEGGDKSRKSAKGDKGGKDKKQIQTSPVPVRKNSRDEEKRES. Residues 553-572 are compositionally biased toward basic and acidic residues; it reads GGDKSRKSAKGDKGGKDKKQ. Phosphoserine is present on serine 576. Residues 583-592 are compositionally biased toward basic and acidic residues; it reads NSRDEEKRES. Residues 668–973 enclose the Protein kinase domain; it reads FVKIKTLGIG…ADDLKAHPFF (306 aa). ATP-binding positions include 674–682 and lysine 697; that span reads LGIGAFGEV. The active-site Proton acceptor is aspartate 791. One can recognise an AGC-kinase C-terminal domain in the interval 974-1052; sequence SAIDFSSDIR…RRFFDDNGYP (79 aa). Positions 994 to 1022 are disordered; that stretch reads SHPMDTSNFDPVDEESPWNDASEGSTKAW. Residue threonine 1041 is modified to Phosphothreonine. Residues 1056–1088 form a disordered region; that stretch reads PKPSGAEASQAESSDLESSDLVDQTEGCQPVYV.

Belongs to the protein kinase superfamily. AGC Ser/Thr protein kinase family. Interacts with and is phosphorylated by AURKA. Binds to AR. Interacts with AJUBA during mitosis and this complex regulates organization of the spindle apparatus through recruitment of gamma-tubulin to the centrosome. Interacts (via PPxY motif) with YAP1 (via WW domains). Interacts with MOB1A and MOB1B. Interacts with LIMD1, WTIP and AJUBA. Interacts with SNAI1. Interacts with WWC1, WWC2 and WWC3 (via their WW domains). Interacts (via UBA domain) with ubiquitinated AMOTL2; the interaction promotes LATS2 phosphorylation of YAP1. The cofactor is Mg(2+). Autophosphorylated and phosphorylated during M-phase and the G1/S-phase of the cell cycle. Phosphorylated and activated by STK3/MST2. Phosphorylated by MAP4Ks; in parallel to STK3/MST2 and resulting to its activation. Phosphorylation by NUAK2 may regulate its activity in phosphorylation and inactivation YAP1. In terms of tissue distribution, expressed at high levels in heart and skeletal muscle and at lower levels in all other tissues examined.

The protein resides in the cytoplasm. It localises to the cytoskeleton. It is found in the microtubule organizing center. The protein localises to the centrosome. Its subcellular location is the spindle pole. The protein resides in the nucleus. It carries out the reaction L-seryl-[protein] + ATP = O-phospho-L-seryl-[protein] + ADP + H(+). The enzyme catalyses L-threonyl-[protein] + ATP = O-phospho-L-threonyl-[protein] + ADP + H(+). Its function is as follows. Negative regulator of YAP1 in the Hippo signaling pathway that plays a pivotal role in organ size control and tumor suppression by restricting proliferation and promoting apoptosis. The core of this pathway is composed of a kinase cascade wherein STK3/MST2 and STK4/MST1, in complex with its regulatory protein SAV1, phosphorylates and activates LATS1/2 in complex with its regulatory protein MOB1, which in turn phosphorylates and inactivates YAP1 oncoprotein and WWTR1/TAZ. Phosphorylation of YAP1 by LATS2 inhibits its translocation into the nucleus to regulate cellular genes important for cell proliferation, cell death, and cell migration. Also phosphorylates YAP1 in response to cell contact inhibition-driven WWP1 ubiquitination of AMOTL2, which results in LATS2 activation. Acts as a tumor suppressor which plays a critical role in centrosome duplication, maintenance of mitotic fidelity and genomic stability. Negatively regulates G1/S transition by down-regulating cyclin E/CDK2 kinase activity. Negative regulator of the androgen receptor. Phosphorylates SNAI1 in the nucleus leading to its nuclear retention and stabilization, which enhances its epithelial-mesenchymal transition and tumor cell invasion/migration activities. This tumor-promoting activity is independent of its effects upon YAP1 or WWTR1/TAZ. Acts as an activator of the NLRP3 inflammasome by mediating phosphorylation of 'Ser-265' of NLRP3 following NLRP3 palmitoylation, promoting NLRP3 activation by NEK7. In Homo sapiens (Human), this protein is Serine/threonine-protein kinase LATS2.